The following is a 298-amino-acid chain: Factor-induced gene 1 protein (298 aa).

4 helical membrane-spanning segments follow: residues 17–37 (IFAL…LIGC), 163–183 (VLMA…YVTV), 195–215 (FLLL…MWTH), and 243–263 (VMAW…WLIF). S288 is modified (phosphoserine). Position 293 is a phosphothreonine (T293). S296 carries the post-translational modification Phosphoserine.

Its subcellular location is the membrane. In terms of biological role, required for efficient mating. This is Factor-induced gene 1 protein (FIG1) from Saccharomyces cerevisiae (strain ATCC 204508 / S288c) (Baker's yeast).